The following is a 203-amino-acid chain: Glycerol-3-phosphate acyltransferase (203 aa).

The next 5 membrane-spanning stretches (helical) occupy residues 10–30, 59–79, 87–107, 116–136, and 168–188; these read LLAL…GLLI, PAAA…VILA, AAQI…YLKF, FFGT…AIWL, and LVVL…ENII.

The protein belongs to the PlsY family. As to quaternary structure, probably interacts with PlsX.

The protein localises to the cell inner membrane. It catalyses the reaction an acyl phosphate + sn-glycerol 3-phosphate = a 1-acyl-sn-glycero-3-phosphate + phosphate. It functions in the pathway lipid metabolism; phospholipid metabolism. Functionally, catalyzes the transfer of an acyl group from acyl-phosphate (acyl-PO(4)) to glycerol-3-phosphate (G3P) to form lysophosphatidic acid (LPA). This enzyme utilizes acyl-phosphate as fatty acyl donor, but not acyl-CoA or acyl-ACP. The sequence is that of Glycerol-3-phosphate acyltransferase from Dinoroseobacter shibae (strain DSM 16493 / NCIMB 14021 / DFL 12).